Reading from the N-terminus, the 316-residue chain is Ribose-phosphate pyrophosphokinase (316 aa).

ATP contacts are provided by residues 37-39 (DGE) and 96-97 (RQ). 2 residues coordinate Mg(2+): histidine 131 and aspartate 171. The active site involves lysine 195. D-ribose 5-phosphate is bound by residues arginine 197, aspartate 221, and 225–229 (DTGGT).

Belongs to the ribose-phosphate pyrophosphokinase family. Class I subfamily. Homohexamer. It depends on Mg(2+) as a cofactor.

It localises to the cytoplasm. The catalysed reaction is D-ribose 5-phosphate + ATP = 5-phospho-alpha-D-ribose 1-diphosphate + AMP + H(+). It participates in metabolic intermediate biosynthesis; 5-phospho-alpha-D-ribose 1-diphosphate biosynthesis; 5-phospho-alpha-D-ribose 1-diphosphate from D-ribose 5-phosphate (route I): step 1/1. Its function is as follows. Involved in the biosynthesis of the central metabolite phospho-alpha-D-ribosyl-1-pyrophosphate (PRPP) via the transfer of pyrophosphoryl group from ATP to 1-hydroxyl of ribose-5-phosphate (Rib-5-P). In Haemophilus ducreyi (strain 35000HP / ATCC 700724), this protein is Ribose-phosphate pyrophosphokinase.